The sequence spans 201 residues: Putative 3-methyladenine DNA glycosylase (201 aa).

Belongs to the DNA glycosylase MPG family.

This chain is Putative 3-methyladenine DNA glycosylase, found in Rhodopseudomonas palustris (strain HaA2).